A 305-amino-acid chain; its full sequence is MSSLVRPINLGKINHSQSTVKDYILLMKPRVISLVIFTGFVGMWLAPYSVHPFIAGIAVVCIALGAGSAGAINMWYDRDIDSLMKRTQKRPIVRGVIESDEALSFGLITGFFAVFFMALCVNLLASFLLLFTIFYYICIYTIWLKRRSIQNIVIGGVSGALPPVIGYAAVSNTISLESIILFLIIFIWTPPHSWALALFCNDDYKNCKVPMMPAVKGTLYTKKQILIYSILLFIVSLMPFFIGMNNFIYLIIAGILGVVFLYYAGSLFYDTSDNKQAKRFFAYSIFYLFFIFLLLYSTNTISTIS.

The next 9 membrane-spanning stretches (helical) occupy residues 31 to 51 (VISL…YSVH), 52 to 72 (PFIA…AGAI), 96 to 118 (VIES…FFMA), 123 to 145 (LLAS…IWLK), 151 to 171 (NIVI…AAVS), 179 to 199 (IILF…LALF), 225 to 245 (ILIY…IGMN), 247 to 267 (FIYL…AGSL), and 281 to 301 (FAYS…TNTI).

It belongs to the UbiA prenyltransferase family. Protoheme IX farnesyltransferase subfamily.

Its subcellular location is the cell inner membrane. It catalyses the reaction heme b + (2E,6E)-farnesyl diphosphate + H2O = Fe(II)-heme o + diphosphate. The protein operates within porphyrin-containing compound metabolism; heme O biosynthesis; heme O from protoheme: step 1/1. Converts heme B (protoheme IX) to heme O by substitution of the vinyl group on carbon 2 of heme B porphyrin ring with a hydroxyethyl farnesyl side group. This chain is Protoheme IX farnesyltransferase, found in Rickettsia massiliae (strain Mtu5).